The sequence spans 277 residues: Urease accessory protein UreD (277 aa).

The protein belongs to the UreD family. UreD, UreF and UreG form a complex that acts as a GTP-hydrolysis-dependent molecular chaperone, activating the urease apoprotein by helping to assemble the nickel containing metallocenter of UreC. The UreE protein probably delivers the nickel.

It localises to the cytoplasm. In terms of biological role, required for maturation of urease via the functional incorporation of the urease nickel metallocenter. This is Urease accessory protein UreD from Yersinia pestis bv. Antiqua (strain Antiqua).